The following is a 149-amino-acid chain: Calmodulin (149 aa).

Alanine 2 carries the N-acetylalanine modification. 4 EF-hand domains span residues glutamate 8–asparagine 43, proline 44–aspartate 79, aspartate 81–lysine 116, and leucine 117–lysine 149. Ca(2+) is bound by residues aspartate 21, aspartate 23, aspartate 25, glutamine 27, glutamate 32, aspartate 57, aspartate 59, asparagine 61, threonine 63, glutamate 68, aspartate 94, aspartate 96, asparagine 98, glutamate 105, aspartate 130, aspartate 132, aspartate 134, arginine 136, and glutamate 141.

Belongs to the calmodulin family.

Functionally, calmodulin mediates the control of a large number of enzymes, ion channels and other proteins by Ca(2+). Among the enzymes to be stimulated by the calmodulin-Ca(2+) complex are a number of protein kinases and phosphatases. The chain is Calmodulin (camA) from Emericella nidulans (strain FGSC A4 / ATCC 38163 / CBS 112.46 / NRRL 194 / M139) (Aspergillus nidulans).